A 170-amino-acid polypeptide reads, in one-letter code: MEQQTRFRHLKMQIQRKLNACLQKSEQFFDRTFAVPTVSYEVRGIKAGVAYLQKNAIKFNRTLLLENPSEFVNQVVPHELAHLIVYQLFGRVKPHGKEWQAVMTNVFQLPAETYHQFDVKSVQGKTFAYRCGCRIHQLSVRRHNKIQRERAVYLCQYCKGRLEPVNKICP.

One can recognise a SprT-like domain in the interval 25–165; it reads SEQFFDRTFA…QYCKGRLEPV (141 aa). Residue histidine 78 participates in Zn(2+) binding. The active site involves glutamate 79. Residue histidine 82 coordinates Zn(2+).

Belongs to the SprT family. The cofactor is Zn(2+).

Its subcellular location is the cytoplasm. In Actinobacillus succinogenes (strain ATCC 55618 / DSM 22257 / CCUG 43843 / 130Z), this protein is Protein SprT.